Consider the following 173-residue polypeptide: Putative metal-dependent hydrolase BcerKBAB4_2443 (173 aa).

Positions 65, 156, and 160 each coordinate Zn(2+).

Belongs to the metal hydrolase YfiT family. In terms of assembly, homodimer. Requires Zn(2+) as cofactor.

Its subcellular location is the cytoplasm. In terms of biological role, possible metal-dependent hydrolase. This is Putative metal-dependent hydrolase BcerKBAB4_2443 from Bacillus mycoides (strain KBAB4) (Bacillus weihenstephanensis).